The following is a 342-amino-acid chain: Oxygen-dependent coproporphyrinogen-III oxidase (342 aa).

Ser-107 serves as a coordination point for substrate. A divalent metal cation contacts are provided by His-111 and His-121. Residue His-121 is the Proton donor of the active site. 123–125 (NYR) contributes to the substrate binding site. 2 residues coordinate a divalent metal cation: His-155 and His-185. The interval 277-312 (YVEFNLVYDRGTIFGLQTNGRTESILMSLPPLVRWE) is important for dimerization.

Belongs to the aerobic coproporphyrinogen-III oxidase family. Homodimer. The cofactor is a divalent metal cation.

It localises to the cytoplasm. It carries out the reaction coproporphyrinogen III + O2 + 2 H(+) = protoporphyrinogen IX + 2 CO2 + 2 H2O. The protein operates within porphyrin-containing compound metabolism; protoporphyrin-IX biosynthesis; protoporphyrinogen-IX from coproporphyrinogen-III (O2 route): step 1/1. Functionally, involved in the heme and chlorophyll biosynthesis. Catalyzes the aerobic oxidative decarboxylation of propionate groups of rings A and B of coproporphyrinogen-III to yield the vinyl groups in protoporphyrinogen-IX. This chain is Oxygen-dependent coproporphyrinogen-III oxidase, found in Synechococcus sp. (strain ATCC 27144 / PCC 6301 / SAUG 1402/1) (Anacystis nidulans).